A 145-amino-acid polypeptide reads, in one-letter code: Secreted LysM effector Vd2LysM (145 aa).

Positions 1 to 18 (MRPDVFVLFTAFLGPAAA) are cleaved as a signal peptide. LysM domains are found at residues 31–75 (GWYI…KIKV) and 96–140 (GWYH…DIVV).

It belongs to the secreted LysM effector family. In terms of assembly, forms homodimers in a chitin-independent manner through interactions at the N-termini of EPL2 monomers. Homodimers are further polymerized in a chitin-dependent manner.

In terms of biological role, secreted effector that enables the plant pathogenic fungus to manipulate host defenses for successful infection. Binds chitin, suppresses chitin-induced immune responses and protects hyphae against degradation by plant hydrolytic enzymes. Chitin-induced polymerization of homodimers forms a contiguous ELP2 highly oligomeric super-complexe that may precipitate at infection sites to eliminate chitin oligomers, and thus suppress the activation of chitin-induced plant immunity. This Verticillium dahliae (strain VdLs.17 / ATCC MYA-4575 / FGSC 10137) (Verticillium wilt) protein is Secreted LysM effector Vd2LysM.